A 130-amino-acid polypeptide reads, in one-letter code: Small ribosomal subunit protein uS11 (130 aa).

This sequence belongs to the universal ribosomal protein uS11 family. In terms of assembly, part of the 30S ribosomal subunit. Interacts with proteins S7 and S18. Binds to IF-3.

Functionally, located on the platform of the 30S subunit, it bridges several disparate RNA helices of the 16S rRNA. Forms part of the Shine-Dalgarno cleft in the 70S ribosome. The chain is Small ribosomal subunit protein uS11 from Kosmotoga olearia (strain ATCC BAA-1733 / DSM 21960 / TBF 19.5.1).